The sequence spans 558 residues: Protein SET DOMAIN GROUP 41 (558 aa).

Residues 115-249 (PSISVAIHHA…SGEEITVSYI (135 aa)) enclose the SET domain.

The protein belongs to the class V-like SAM-binding methyltransferase superfamily.

The chain is Protein SET DOMAIN GROUP 41 (SDG41) from Arabidopsis thaliana (Mouse-ear cress).